Reading from the N-terminus, the 286-residue chain is Energy-coupling factor transporter ATP-binding protein EcfA2 (286 aa).

The ABC transporter domain occupies 3–246 (IRFDNVSYTY…KKKLADWHIG (244 aa)). 40–47 (GQTGSGKS) serves as a coordination point for ATP.

This sequence belongs to the ABC transporter superfamily. Energy-coupling factor EcfA family. Forms a stable energy-coupling factor (ECF) transporter complex composed of 2 membrane-embedded substrate-binding proteins (S component), 2 ATP-binding proteins (A component) and 2 transmembrane proteins (T component).

It is found in the cell membrane. ATP-binding (A) component of a common energy-coupling factor (ECF) ABC-transporter complex. Unlike classic ABC transporters this ECF transporter provides the energy necessary to transport a number of different substrates. This is Energy-coupling factor transporter ATP-binding protein EcfA2 from Staphylococcus aureus (strain USA300).